Here is a 646-residue protein sequence, read N- to C-terminus: Galactofuranosyltransferase GlfT2 (646 aa).

UDP-alpha-D-galactofuranose is bound by residues R182, Q211, N240, and D267. Mn(2+)-binding residues include D267 and D269. Residue D384 is the Proton acceptor of the active site. Residue H408 participates in Mn(2+) binding.

Belongs to the glycosyltransferase 2 family. In terms of assembly, homotetramer. Requires Mn(2+) as cofactor. Mg(2+) serves as cofactor.

The protein resides in the cell membrane. The catalysed reaction is beta-D-galactofuranosyl-(1-&gt;5)-beta-D-galactofuranosyl-(1-&gt;4)-alpha-L-rhamnosyl-(1-&gt;3)-N-acetyl-alpha-D-glucosaminyl-diphospho-trans,octa-cis-decaprenol + 28 UDP-alpha-D-galactofuranose = [beta-D-galactofuranosyl-(1-&gt;5)-beta-D-galactofuranosyl-(1-&gt;6)]14-beta-D-galactofuranosyl-(1-&gt;5)-beta-D-galactofuranosyl-(1-&gt;4)-alpha-L-rhamnopyranosyl-(1-&gt;3)-N-acetyl-alpha-D-glucosaminyl-diphospho-trans,octa-cis-decaprenol + 28 UDP + 28 H(+). The protein operates within cell wall biogenesis; cell wall polysaccharide biosynthesis. In terms of biological role, involved in the galactan polymerization of the arabinogalactan (AG) region of the mycolylarabinogalactan-peptidoglycan (mAGP) complex, an essential component of the mycobacteria cell wall. Thus, successively transfers approximately 28 galactofuranosyl (Galf) residues from UDP-galactofuranose (UDP-Galf) onto the galactofuranosyl-galactofuranosyl-rhamnosyl-GlcNAc-diphospho-decaprenol (Galf-Galf-Rha-GlcNAc-PP-C50) acceptor produced by GlfT1, with alternating 1-&gt;5 and 1-&gt;6 links, forming a galactan domain with approximately 30 galactofuranosyl residues. The protein is Galactofuranosyltransferase GlfT2 of Mycolicibacterium smegmatis (strain ATCC 700084 / mc(2)155) (Mycobacterium smegmatis).